The primary structure comprises 71 residues: Small ribosomal subunit protein bS21 (71 aa).

This sequence belongs to the bacterial ribosomal protein bS21 family.

This Cellvibrio japonicus (strain Ueda107) (Pseudomonas fluorescens subsp. cellulosa) protein is Small ribosomal subunit protein bS21.